The primary structure comprises 136 residues: Large ribosomal subunit protein uL3 (136 aa).

The residue at position 83 (glutamine 83) is an N5-methylglutamine.

It belongs to the universal ribosomal protein uL3 family. As to quaternary structure, part of the 50S ribosomal subunit. Forms a cluster with proteins L14 and L19. Methylated by PrmB.

In terms of biological role, one of the primary rRNA binding proteins, it binds directly near the 3'-end of the 23S rRNA, where it nucleates assembly of the 50S subunit. The polypeptide is Large ribosomal subunit protein uL3 (rplC) (Carsonella ruddii).